A 680-amino-acid polypeptide reads, in one-letter code: Chaperone protein dnaK3 (680 aa).

Thr205 bears the Phosphothreonine; by autocatalysis mark. Residues 640-680 form a disordered region; it reads GRERRRDDDEDEWAEPPRTRRSRSYSQRADSAPWDDWDDDW.

The protein belongs to the heat shock protein 70 family.

In terms of biological role, acts as a chaperone. This Thermosynechococcus vestitus (strain NIES-2133 / IAM M-273 / BP-1) protein is Chaperone protein dnaK3 (dnaK3).